The primary structure comprises 306 residues: ADP-polyphosphate phosphotransferase 2 (306 aa).

The protein belongs to the polyphosphate kinase 2 (PPK2) family. Class I subfamily.

It catalyses the reaction [phosphate](n) + ATP = [phosphate](n+1) + ADP. The enzyme catalyses [phosphate](n) + GTP = [phosphate](n+1) + GDP. Uses inorganic polyphosphate (polyP) as a donor to convert ADP to ATP. Can also convert GDP to GTP, with lower efficiency. This Rhizobium meliloti (strain 1021) (Ensifer meliloti) protein is ADP-polyphosphate phosphotransferase 2.